Here is a 144-residue protein sequence, read N- to C-terminus: Ribosome maturation factor RimP (144 aa).

The protein belongs to the RimP family.

The protein localises to the cytoplasm. Required for maturation of 30S ribosomal subunits. This Methylobacillus flagellatus (strain ATCC 51484 / DSM 6875 / VKM B-1610 / KT) protein is Ribosome maturation factor RimP.